Consider the following 199-residue polypeptide: Nucleoside triphosphate pyrophosphatase (199 aa).

Catalysis depends on D76, which acts as the Proton acceptor.

Belongs to the Maf family. A divalent metal cation serves as cofactor.

It is found in the cytoplasm. It catalyses the reaction a ribonucleoside 5'-triphosphate + H2O = a ribonucleoside 5'-phosphate + diphosphate + H(+). It carries out the reaction a 2'-deoxyribonucleoside 5'-triphosphate + H2O = a 2'-deoxyribonucleoside 5'-phosphate + diphosphate + H(+). Nucleoside triphosphate pyrophosphatase. May have a dual role in cell division arrest and in preventing the incorporation of modified nucleotides into cellular nucleic acids. In Ruegeria sp. (strain TM1040) (Silicibacter sp.), this protein is Nucleoside triphosphate pyrophosphatase.